Consider the following 315-residue polypeptide: MSNKQETKILGMPPFVVDFLMGGVSAAVSKTAAAPIERIKLLVQNQDEMIKAGRLDRRYNGIIDCFRRTTADEGLMALWRGNTANVIRYFPTQALNFAFRDKFKAMFGYKKDKDGYAKWMAGNLASGGAAGATSLLFVYSLDYARTRLANDAKSAKGGGARQFNGLIDVYRKTLASDGIAGLYRGFGPSVAGIVVYRGLYFGMYDSIKPVVLVGPLANNFLASFLLGWCVTTGAGIASYPLDTVRRRMMMTSGEAVKYKSSIDAFRQIIAKEGVKSLFKGAGANILRGVAGAGVLSIYDQLQILLFGKAFKGGSG.

At 1–13 the chain is on the mitochondrial intermembrane side; it reads MSNKQETKILGMP. Solcar repeat units lie at residues 13–106 and 118–210; these read PPFV…FKAM and KWMA…IKPV. A helical transmembrane segment spans residues 14-37; it reads PFVVDFLMGGVSAAVSKTAAAPIE. K30 contacts bongkrekate. Over 38–80 the chain is Mitochondrial matrix; the sequence is RIKLLVQNQDEMIKAGRLDRRYNGIIDCFRRTTADEGLMALWR. A cardiolipin contacts are provided by residues I62 and 81 to 83; that span reads GNT. Residues 81–104 form a helical membrane-spanning segment; that stretch reads GNTANVIRYFPTQALNFAFRDKFK. Residue R88 coordinates ADP. Bongkrekate is bound by residues 88-89 and N96; that span reads RY. Over 105–115 the chain is Mitochondrial intermembrane; sequence AMFGYKKDKDG. Residues 116 to 145 form a helical membrane-spanning segment; sequence YAKWMAGNLASGGAAGATSLLFVYSLDYAR. Residues 146-184 are Mitochondrial matrix-facing; that stretch reads TRLANDAKSAKGGGARQFNGLIDVYRKTLASDGIAGLYR. A cardiolipin-binding positions include L166 and 184–185; that span reads RG. A helical membrane pass occupies residues 185–213; sequence GFGPSVAGIVVYRGLYFGMYDSIKPVVLV. 196–197 contacts bongkrekate; the sequence is YR. At 214 to 216 the chain is on the mitochondrial intermembrane side; the sequence is GPL. Residues 217 to 242 form a helical membrane-spanning segment; the sequence is ANNFLASFLLGWCVTTGAGIASYPLD. The stretch at 218–304 is one Solcar repeat; it reads NNFLASFLLG…LSIYDQLQIL (87 aa). Over 243–283 the chain is Mitochondrial matrix; sequence TVRRRMMMTSGEAVKYKSSIDAFRQIIAKEGVKSLFKGAGA. Residue R245 coordinates ADP. A Nucleotide carrier signature motif motif is present at residues 245–250; sequence RRRMMM. A cardiolipin contacts are provided by residues 260-261 and 280-282; these read SS and GAG. Residues 284 to 304 traverse the membrane as a helical segment; it reads NILRGVAGAGVLSIYDQLQIL. The Mitochondrial intermembrane portion of the chain corresponds to 305 to 315; it reads LFGKAFKGGSG.

The protein belongs to the mitochondrial carrier (TC 2.A.29) family. In terms of assembly, monomer.

The protein localises to the mitochondrion inner membrane. It catalyses the reaction ADP(in) + ATP(out) = ADP(out) + ATP(in). With respect to regulation, the matrix-open state (m-state) is inhibited by the membrane-permeable bongkrekic acid (BKA). The cytoplasmic-open state (c-state) is inhibited by the membrane-impermeable toxic inhibitor carboxyatractyloside (CATR). In terms of biological role, ADP:ATP antiporter that mediates import of ADP into the mitochondrial matrix for ATP synthesis, and export of ATP out to fuel the cell. Cycles between the cytoplasmic-open state (c-state) and the matrix-open state (m-state): operates by the alternating access mechanism with a single substrate-binding site intermittently exposed to either the cytosolic (c-state) or matrix (m-state) side of the inner mitochondrial membrane. The polypeptide is ADP/ATP translocase (Thermothelomyces thermophilus (strain ATCC 42464 / BCRC 31852 / DSM 1799) (Sporotrichum thermophile)).